A 715-amino-acid polypeptide reads, in one-letter code: Polyribonucleotide nucleotidyltransferase (715 aa).

D498 and D504 together coordinate Mg(2+). The region spanning 565-625 is the KH domain; that stretch reads PKVCMMQIKP…ETVKKTVAFI (61 aa). Residues 635–706 form the S1 motif domain; sequence GTCYQASILR…DRGRIDFLLL (72 aa).

This sequence belongs to the polyribonucleotide nucleotidyltransferase family. Requires Mg(2+) as cofactor.

Its subcellular location is the cytoplasm. The enzyme catalyses RNA(n+1) + phosphate = RNA(n) + a ribonucleoside 5'-diphosphate. In terms of biological role, involved in mRNA degradation. Catalyzes the phosphorolysis of single-stranded polyribonucleotides processively in the 3'- to 5'-direction. The chain is Polyribonucleotide nucleotidyltransferase from Onion yellows phytoplasma (strain OY-M).